Consider the following 433-residue polypeptide: 23S rRNA (uracil(1939)-C(5))-methyltransferase RlmD (433 aa).

Residues 10-68 (RTTTRQIITVSVNDLDSFGQGVARHNGKTLFIPGLLPQENAEVAVTEDKKQYARAKVVR) form the TRAM domain. Positions 81, 87, 90, and 162 each coordinate [4Fe-4S] cluster. Residues glutamine 265, phenylalanine 294, asparagine 299, glutamate 315, asparagine 342, and aspartate 363 each contribute to the S-adenosyl-L-methionine site. The active-site Nucleophile is cysteine 389.

This sequence belongs to the class I-like SAM-binding methyltransferase superfamily. RNA M5U methyltransferase family. RlmD subfamily.

The catalysed reaction is uridine(1939) in 23S rRNA + S-adenosyl-L-methionine = 5-methyluridine(1939) in 23S rRNA + S-adenosyl-L-homocysteine + H(+). Functionally, catalyzes the formation of 5-methyl-uridine at position 1939 (m5U1939) in 23S rRNA. The protein is 23S rRNA (uracil(1939)-C(5))-methyltransferase RlmD of Shigella flexneri serotype 5b (strain 8401).